Here is a 555-residue protein sequence, read N- to C-terminus: Probable apyrase 6 (555 aa).

The segment covering Met1–Val10 has biased composition (basic residues). Residues Met1–Pro45 form a disordered region. Residues Met1–Leu55 are Cytoplasmic-facing. The segment covering Arg28–Pro45 has biased composition (polar residues). Residues Leu56–Phe76 traverse the membrane as a helical segment. The Extracellular segment spans residues Ser77–Thr512. Val89 to Arg99 contacts ATP. Glu212 (proton acceptor) is an active-site residue. Gly236 to Gln246 contributes to the ATP binding site. Residues Asn267 and Asn348 are each glycosylated (N-linked (GlcNAc...) asparagine). The chain crosses the membrane as a helical span at residues Leu513–Trp533. The Cytoplasmic portion of the chain corresponds to Arg534–Arg555.

The protein belongs to the GDA1/CD39 NTPase family. Ca(2+) serves as cofactor. In terms of tissue distribution, detected in mature pollen grains (at the protein level). Also expressed in the veins and hydathode regions of rosette leaves.

Its subcellular location is the cytoplasmic vesicle membrane. The enzyme catalyses a ribonucleoside 5'-triphosphate + 2 H2O = a ribonucleoside 5'-phosphate + 2 phosphate + 2 H(+). In terms of biological role, catalyzes the hydrolysis of phosphoanhydride bonds of nucleoside tri- and di-phosphates. Involved in the regulation of pollen and anther development. The polypeptide is Probable apyrase 6 (APY6) (Arabidopsis thaliana (Mouse-ear cress)).